The chain runs to 324 residues: uncharacterized protein (324 aa).

8 consecutive transmembrane segments (helical) span residues 5 to 24, 39 to 61, 68 to 90, 95 to 117, 130 to 152, 162 to 179, 199 to 218, and 228 to 250; these read VIGILASLFFAVTFILNRAM, FIFMVPFLCLIVIMRGTFTPLLL, FYWIKWSFVGFVLFYAPITFAAA, WLIAGTWQITIVAGVLLSPLFYV, QKIPLVSLGTSVIILIGAALIQL, MLLFSVLPVVIAAFAYPL, LGMTLASLPFWLILAAYGWW, and TVQSFIVAVSSGIIATVLFFWAT.

The protein localises to the cell membrane. This is an uncharacterized protein from Bacillus subtilis (strain 168).